We begin with the raw amino-acid sequence, 862 residues long: DNA mismatch repair protein MutS (862 aa).

608 to 615 (GPNMAGKS) is an ATP binding site.

This sequence belongs to the DNA mismatch repair MutS family.

In terms of biological role, this protein is involved in the repair of mismatches in DNA. It is possible that it carries out the mismatch recognition step. This protein has a weak ATPase activity. This chain is DNA mismatch repair protein MutS, found in Borreliella afzelii (strain PKo) (Borrelia afzelii).